Here is a 194-residue protein sequence, read N- to C-terminus: Fibroblast growth factor 7 (194 aa).

A signal peptide spans 1–31 (MRKWILTWILPSLLHRSCFHIICLVGTLSLD). Residue N45 is glycosylated (N-linked (GlcNAc...) asparagine).

The protein belongs to the heparin-binding growth factors family. Interacts with FGFBP1. Interacts with FGFR2. Affinity between fibroblast growth factors (FGFs) and their receptors is increased by heparan sulfate glycosaminoglycans that function as coreceptors.

It localises to the secreted. Its function is as follows. Plays an important role in the regulation of embryonic development, cell proliferation and cell differentiation. Required for normal branching morphogenesis. Growth factor active on keratinocytes. Possible major paracrine effector of normal epithelial cell proliferation. The protein is Fibroblast growth factor 7 (FGF7) of Sus scrofa (Pig).